A 385-amino-acid chain; its full sequence is Acetate kinase (385 aa).

Mg(2+) is bound at residue Asn9. ATP is bound at residue Lys16. Residue Arg87 coordinates substrate. The Proton donor/acceptor role is filled by Asp144. ATP is bound by residues 202-206 and 277-279; these read HLGSG and DMR. A Mg(2+)-binding site is contributed by Glu373.

It belongs to the acetokinase family. Homodimer. Requires Mg(2+) as cofactor. The cofactor is Mn(2+).

It localises to the cytoplasm. It carries out the reaction acetate + ATP = acetyl phosphate + ADP. Its pathway is metabolic intermediate biosynthesis; acetyl-CoA biosynthesis; acetyl-CoA from acetate: step 1/2. Functionally, catalyzes the formation of acetyl phosphate from acetate and ATP. Can also catalyze the reverse reaction. This is Acetate kinase from Rickettsia prowazekii (strain Madrid E).